A 229-amino-acid chain; its full sequence is Trehalose-6-phosphate phosphatase-related protein (229 aa).

The active-site Nucleophile is aspartate 5. 3 residues coordinate Mg(2+): aspartate 5, aspartate 7, and aspartate 177. Aspartate 5–aspartate 7 serves as a coordination point for substrate.

It belongs to the trehalose phosphatase family. The cofactor is Mg(2+).

It catalyses the reaction alpha,alpha-trehalose 6-phosphate + H2O = alpha,alpha-trehalose + phosphate. The protein operates within glycan biosynthesis; trehalose biosynthesis. Functionally, removes the phosphate from trehalose 6-phosphate (Tre6P) to produce free trehalose. Also catalyzes the dephosphorylation of para-nitrophenyl phosphate (pNPP), but with lesser efficiency (in vitro). This chain is Trehalose-6-phosphate phosphatase-related protein, found in Thermoplasma acidophilum (strain ATCC 25905 / DSM 1728 / JCM 9062 / NBRC 15155 / AMRC-C165).